A 294-amino-acid polypeptide reads, in one-letter code: Homeobox protein Nkx-2.5 (294 aa).

Disordered stretches follow at residues 48–69 and 102–122; these read GSEP…PAAF and EQEK…RRKP. Pro residues predominate over residues 52-69; that stretch reads PALPELPEPPPAKPPAAF. The segment covering 102–114 has biased composition (basic and acidic residues); it reads EQEKRELEDPERP. The homeobox DNA-binding region spans 119-178; that stretch reads RRKPRVLFSQAQVYELERRFKQQKYLSAPERDHLANVLKLTSTQVKIWFQNRRYKCKRQR.

Belongs to the NK-2 homeobox family. Homodimer (via the homeobox); binds DNA as homodimer.

The protein localises to the nucleus. In terms of biological role, transcription factor required for the development of the heart and the spleen. Implicated in commitment to and/or differentiation of the myocardial lineage. Binds to the core DNA motif of promoter. The protein is Homeobox protein Nkx-2.5 (NKX-2.5) of Gallus gallus (Chicken).